The sequence spans 141 residues: Large ribosomal subunit protein uL11 (141 aa).

It belongs to the universal ribosomal protein uL11 family. As to quaternary structure, part of the ribosomal stalk of the 50S ribosomal subunit. Interacts with L10 and the large rRNA to form the base of the stalk. L10 forms an elongated spine to which L12 dimers bind in a sequential fashion forming a multimeric L10(L12)X complex. Post-translationally, one or more lysine residues are methylated.

Forms part of the ribosomal stalk which helps the ribosome interact with GTP-bound translation factors. In Streptococcus equi subsp. equi (strain 4047), this protein is Large ribosomal subunit protein uL11.